Reading from the N-terminus, the 359-residue chain is Threonine dehydratase biosynthetic, chloroplastic (359 aa).

ACT-like domains lie at 184 to 256 (ALLA…NFSH) and 278 to 349 (IFGE…LDNS).

Belongs to the serine/threonine dehydratase family. Homotetramer. Pyridoxal 5'-phosphate serves as cofactor. In terms of tissue distribution, floral buds of untreated plants. After ABA treatment or mechanical wounding is mostly accumulated in leaves, to a lesser extent in stems, but not in roots. Expressed in anthers, carpel leaves, pith cells, sepals and petals. Not expressed in stomium, vascular bundles, epidermal cells or pollen mother cells.

The protein localises to the plastid. It is found in the chloroplast. The enzyme catalyses L-threonine = 2-oxobutanoate + NH4(+). It participates in amino-acid biosynthesis; L-isoleucine biosynthesis; 2-oxobutanoate from L-threonine: step 1/1. The protein is Threonine dehydratase biosynthetic, chloroplastic of Solanum tuberosum (Potato).